Consider the following 506-residue polypeptide: MTAPKPVVLCILDGWGLRAEREANAVALADTPTFDRLMATCPNATLVTHGPDVGLPRGQMGNSEVGHTNIGAGRVVAMDLGAIDLAIEEGSFPQNPALRDFIAKVKANGGTAHLMGVVSDGGVHGHIQHLISAVEVLAGEGIPVVIHAITDGRDVAPTSAGEFVGQLVRVLPEGARIGTVIGRYWAMDRDKRWDRVKRASDAMLHATGEHAPDAEAAVAAALARGETDEFIAPTVVGDYAGARDGDGFFCLNFRADRAREILAGLGQPGFDAYETGTRPDWSAFLGMVDYSKEHDRFMTAAYPKPVIRNTLGEWVASHGLRQFRIAETEKYPHVTFFLNGGREAPETGEDRYMANSPKVATYDLQPEMSAPDVSDHLVEAIGAGYDLIVVNYANPDMVGHTGDLKAAMAAVEEVDRGLGRAVEAVTTAGGAMIVTADHGNCETMVDPETGGPHTAHTTNPVPVILVNGPAGARLHAGRLADLAPTLLQLMQLPQPEEMTGRSLIDA.

Asp13 and Ser63 together coordinate Mn(2+). Ser63 (phosphoserine intermediate) is an active-site residue. Substrate-binding positions include His124, Arg153 to Asp154, Arg183, Arg189, Arg254 to Arg257, and Lys330. Mn(2+) contacts are provided by Asp396, His400, Asp437, His438, and His456.

It belongs to the BPG-independent phosphoglycerate mutase family. As to quaternary structure, monomer. The cofactor is Mn(2+).

The catalysed reaction is (2R)-2-phosphoglycerate = (2R)-3-phosphoglycerate. Its pathway is carbohydrate degradation; glycolysis; pyruvate from D-glyceraldehyde 3-phosphate: step 3/5. Functionally, catalyzes the interconversion of 2-phosphoglycerate and 3-phosphoglycerate. The sequence is that of 2,3-bisphosphoglycerate-independent phosphoglycerate mutase from Cereibacter sphaeroides (strain ATCC 17029 / ATH 2.4.9) (Rhodobacter sphaeroides).